A 335-amino-acid chain; its full sequence is Acetyl-coenzyme A carboxylase carboxyl transferase subunit alpha (335 aa).

The CoA carboxyltransferase C-terminal domain occupies 40–294; that stretch reads QLETLAARRR…KEAIEKHLNA (255 aa).

It belongs to the AccA family. In terms of assembly, acetyl-CoA carboxylase is a heterohexamer composed of biotin carboxyl carrier protein (AccB), biotin carboxylase (AccC) and two subunits each of ACCase subunit alpha (AccA) and ACCase subunit beta (AccD).

The protein localises to the cytoplasm. The catalysed reaction is N(6)-carboxybiotinyl-L-lysyl-[protein] + acetyl-CoA = N(6)-biotinyl-L-lysyl-[protein] + malonyl-CoA. Its pathway is lipid metabolism; malonyl-CoA biosynthesis; malonyl-CoA from acetyl-CoA: step 1/1. In terms of biological role, component of the acetyl coenzyme A carboxylase (ACC) complex. First, biotin carboxylase catalyzes the carboxylation of biotin on its carrier protein (BCCP) and then the CO(2) group is transferred by the carboxyltransferase to acetyl-CoA to form malonyl-CoA. This Prochlorococcus marinus (strain MIT 9301) protein is Acetyl-coenzyme A carboxylase carboxyl transferase subunit alpha.